Reading from the N-terminus, the 393-residue chain is CAI-1 autoinducer synthase (393 aa).

An N6-(pyridoxal phosphate)lysine modification is found at Lys240.

The protein belongs to the class-II pyridoxal-phosphate-dependent aminotransferase family. The cofactor is pyridoxal 5'-phosphate.

In terms of biological role, required for the synthesis of the quorum-sensing autoinducer CAI-1 ((S)-3-hydroxytridecan-4-one) which probably functions as an intragenus signal. This Vibrio campbellii (strain ATCC BAA-1116) protein is CAI-1 autoinducer synthase (cqsA).